Consider the following 437-residue polypeptide: Oxysterol-binding protein homolog 7 (437 aa).

Positions 23-32 are enriched in polar residues; the sequence is IASNAANSKP. Positions 23-42 are disordered; it reads IASNAANSKPSGADTDDIDE. Residues 54 to 393 are OSBP-related domain (ORD); that stretch reads IISQLKPGCD…EDLDYYIYKH (340 aa). Residues 64 to 69, 126 to 129, and 157 to 158 contribute to the a 1,2-diacyl-sn-glycero-3-phospho-(1D-myo-inositol 4-phosphate) site; these read LSRITL, KPLN, and HH. A 1,2-diacyl-sn-glycero-3-phospho-L-serine is bound by residues 64–69 and Asn129; that span reads LSRITL. An a 1,2-diacyl-sn-glycero-3-phospho-L-serine-binding site is contributed by Ser183. Lys276 participates in a covalent cross-link: Glycyl lysine isopeptide (Lys-Gly) (interchain with G-Cter in ubiquitin). Positions 351, 355, and 359 each coordinate a 1,2-diacyl-sn-glycero-3-phospho-(1D-myo-inositol 4-phosphate).

Belongs to the OSBP family. Interacts with the AAA ATPase VPS4; regulates OSH7 membrane association. VPS4 is required for membrane dissociation of OSH7.

It localises to the cytoplasm. It is found in the cell membrane. The protein resides in the endoplasmic reticulum membrane. The catalysed reaction is a 1,2-diacyl-sn-glycero-3-phospho-L-serine(in) = a 1,2-diacyl-sn-glycero-3-phospho-L-serine(out). In terms of biological role, ipid transport protein (LTP) involved in non-vesicular transfer of lipids between membranes. Functions in phosphoinositide-coupled directional transport of various lipids by carrying the lipid molecule in a hydrophobic pocket and transferring it between membranes through the cytosol. Involved in maintenance of intracellular sterol distribution and homeostasis. Involved in lipid countertransport between the endoplasmic reticulum and the plasma membrane. Specifically exchanges phosphatidylserine with phosphatidylinositol 4-phosphate (PI4P), delivering phosphatidylserine to the PM in exchange for PI4P, which is delivered to the ER-localized PI4P phosphatase SAC1 for degradation. Thus, by maintaining a PI4P gradient at the ER/PM interface, SAC1 drives PS transport. Binds phosphatidylserine and PI4P in a mutually exclusive manner. In Saccharomyces cerevisiae (strain ATCC 204508 / S288c) (Baker's yeast), this protein is Oxysterol-binding protein homolog 7.